Reading from the N-terminus, the 372-residue chain is 4-hydroxy-3-methylbut-2-en-1-yl diphosphate synthase (flavodoxin) (372 aa).

[4Fe-4S] cluster is bound by residues Cys-270, Cys-273, Cys-305, and Glu-312.

This sequence belongs to the IspG family. The cofactor is [4Fe-4S] cluster.

It catalyses the reaction (2E)-4-hydroxy-3-methylbut-2-enyl diphosphate + oxidized [flavodoxin] + H2O + 2 H(+) = 2-C-methyl-D-erythritol 2,4-cyclic diphosphate + reduced [flavodoxin]. It functions in the pathway isoprenoid biosynthesis; isopentenyl diphosphate biosynthesis via DXP pathway; isopentenyl diphosphate from 1-deoxy-D-xylulose 5-phosphate: step 5/6. In terms of biological role, converts 2C-methyl-D-erythritol 2,4-cyclodiphosphate (ME-2,4cPP) into 1-hydroxy-2-methyl-2-(E)-butenyl 4-diphosphate. The sequence is that of 4-hydroxy-3-methylbut-2-en-1-yl diphosphate synthase (flavodoxin) from Cronobacter sakazakii (strain ATCC BAA-894) (Enterobacter sakazakii).